Reading from the N-terminus, the 184-residue chain is Protein GrpE (184 aa).

The protein belongs to the GrpE family. Homodimer.

The protein localises to the cytoplasm. Functionally, participates actively in the response to hyperosmotic and heat shock by preventing the aggregation of stress-denatured proteins, in association with DnaK and GrpE. It is the nucleotide exchange factor for DnaK and may function as a thermosensor. Unfolded proteins bind initially to DnaJ; upon interaction with the DnaJ-bound protein, DnaK hydrolyzes its bound ATP, resulting in the formation of a stable complex. GrpE releases ADP from DnaK; ATP binding to DnaK triggers the release of the substrate protein, thus completing the reaction cycle. Several rounds of ATP-dependent interactions between DnaJ, DnaK and GrpE are required for fully efficient folding. The chain is Protein GrpE from Pseudomonas putida (strain GB-1).